Here is a 91-residue protein sequence, read N- to C-terminus: Probable Fe(2+)-trafficking protein (91 aa).

This sequence belongs to the Fe(2+)-trafficking protein family. Monomer.

In terms of biological role, could be a mediator in iron transactions between iron acquisition and iron-requiring processes, such as synthesis and/or repair of Fe-S clusters in biosynthetic enzymes. The protein is Probable Fe(2+)-trafficking protein of Escherichia coli O7:K1 (strain IAI39 / ExPEC).